Here is a 363-residue protein sequence, read N- to C-terminus: Carbamoyl phosphate synthase small chain (363 aa).

The interval 1–171 (MEDGTLFAGA…PYRIPGPGPR (171 aa)) is CPSase. Residues S39, G219, and G221 each coordinate L-glutamine. In terms of domain architecture, Glutamine amidotransferase type-1 spans 171–359 (RVVAVDFGAK…LALVDRSAVS (189 aa)). Residue C248 is the Nucleophile of the active site. Positions 249, 252, 290, 292, and 293 each coordinate L-glutamine. Residues H332 and E334 contribute to the active site.

It belongs to the CarA family. Composed of two chains; the small (or glutamine) chain promotes the hydrolysis of glutamine to ammonia, which is used by the large (or ammonia) chain to synthesize carbamoyl phosphate. Tetramer of heterodimers (alpha,beta)4.

The catalysed reaction is hydrogencarbonate + L-glutamine + 2 ATP + H2O = carbamoyl phosphate + L-glutamate + 2 ADP + phosphate + 2 H(+). The enzyme catalyses L-glutamine + H2O = L-glutamate + NH4(+). It participates in amino-acid biosynthesis; L-arginine biosynthesis; carbamoyl phosphate from bicarbonate: step 1/1. The protein operates within pyrimidine metabolism; UMP biosynthesis via de novo pathway; (S)-dihydroorotate from bicarbonate: step 1/3. Small subunit of the glutamine-dependent carbamoyl phosphate synthetase (CPSase). CPSase catalyzes the formation of carbamoyl phosphate from the ammonia moiety of glutamine, carbonate, and phosphate donated by ATP, constituting the first step of 2 biosynthetic pathways, one leading to arginine and/or urea and the other to pyrimidine nucleotides. The small subunit (glutamine amidotransferase) binds and cleaves glutamine to supply the large subunit with the substrate ammonia. In Symbiobacterium thermophilum (strain DSM 24528 / JCM 14929 / IAM 14863 / T), this protein is Carbamoyl phosphate synthase small chain.